A 379-amino-acid chain; its full sequence is Lipid-A-disaccharide synthase (379 aa).

This sequence belongs to the LpxB family.

It catalyses the reaction a lipid X + a UDP-2-N,3-O-bis[(3R)-3-hydroxyacyl]-alpha-D-glucosamine = a lipid A disaccharide + UDP + H(+). It participates in bacterial outer membrane biogenesis; LPS lipid A biosynthesis. Functionally, condensation of UDP-2,3-diacylglucosamine and 2,3-diacylglucosamine-1-phosphate to form lipid A disaccharide, a precursor of lipid A, a phosphorylated glycolipid that anchors the lipopolysaccharide to the outer membrane of the cell. The protein is Lipid-A-disaccharide synthase of Aeromonas hydrophila subsp. hydrophila (strain ATCC 7966 / DSM 30187 / BCRC 13018 / CCUG 14551 / JCM 1027 / KCTC 2358 / NCIMB 9240 / NCTC 8049).